An 880-amino-acid polypeptide reads, in one-letter code: Valine--tRNA ligase (880 aa).

The 'HIGH' region motif lies at Pro48–His58. The 'KMSKS' region motif lies at Lys527–Ser531. Lys530 contacts ATP. 2 coiled-coil regions span residues Lys717–Asn741 and Leu810–Lys880.

Belongs to the class-I aminoacyl-tRNA synthetase family. ValS type 1 subfamily. Monomer.

Its subcellular location is the cytoplasm. The enzyme catalyses tRNA(Val) + L-valine + ATP = L-valyl-tRNA(Val) + AMP + diphosphate. Catalyzes the attachment of valine to tRNA(Val). As ValRS can inadvertently accommodate and process structurally similar amino acids such as threonine, to avoid such errors, it has a 'posttransfer' editing activity that hydrolyzes mischarged Thr-tRNA(Val) in a tRNA-dependent manner. This is Valine--tRNA ligase from Clostridium tetani (strain Massachusetts / E88).